The primary structure comprises 400 residues: Elongation factor Tu 2 (400 aa).

Residues Lys10–Gln209 enclose the tr-type G domain. Positions Gly19–Thr26 are G1. Gly19–Thr26 is a GTP binding site. Residue Thr26 coordinates Mg(2+). The interval Gly60–Asn64 is G2. Residues Asp81 to Gly84 are G3. Residues Asp81 to His85 and Asn136 to Asp139 contribute to the GTP site. A G4 region spans residues Asn136–Asp139. The interval Ser174–Leu176 is G5.

This sequence belongs to the TRAFAC class translation factor GTPase superfamily. Classic translation factor GTPase family. EF-Tu/EF-1A subfamily. Monomer.

It is found in the cytoplasm. It carries out the reaction GTP + H2O = GDP + phosphate + H(+). Its function is as follows. GTP hydrolase that promotes the GTP-dependent binding of aminoacyl-tRNA to the A-site of ribosomes during protein biosynthesis. The chain is Elongation factor Tu 2 from Syntrophomonas wolfei subsp. wolfei (strain DSM 2245B / Goettingen).